Consider the following 267-residue polypeptide: B3 domain-containing protein Os02g0455800 (267 aa).

The TF-B3 DNA-binding region spans 30 to 131 (EKFLMPSDLC…RLFICCRLGT (102 aa)). A disordered region spans residues 172–221 (QARLHDGNQDGGGAPSRHVPSSGRRVEAQLSRVSSRRQRRTMKHSIPEPT). The span at 205-214 (SSRRQRRTMK) shows a compositional bias: basic residues.

Its subcellular location is the nucleus. This is B3 domain-containing protein Os02g0455800 from Oryza sativa subsp. japonica (Rice).